Reading from the N-terminus, the 328-residue chain is Ketol-acid reductoisomerase (NADP(+)) (328 aa).

Residues 2–182 form the KARI N-terminal Rossmann domain; sequence AKIYTDREAS…GATRAGVIET (181 aa). Residues 25–28, R48, S53, and 83–86 contribute to the NADP(+) site; these read YGIQ and DMEQ. The active site involves H108. G134 provides a ligand contact to NADP(+). One can recognise a KARI C-terminal knotted domain in the interval 183–328; the sequence is TFAEETETDL…EEMRKLLFGP (146 aa). The Mg(2+) site is built by D191, E195, E227, and E231. Residue S252 coordinates substrate.

This sequence belongs to the ketol-acid reductoisomerase family. Requires Mg(2+) as cofactor.

It catalyses the reaction (2R)-2,3-dihydroxy-3-methylbutanoate + NADP(+) = (2S)-2-acetolactate + NADPH + H(+). The catalysed reaction is (2R,3R)-2,3-dihydroxy-3-methylpentanoate + NADP(+) = (S)-2-ethyl-2-hydroxy-3-oxobutanoate + NADPH + H(+). Its pathway is amino-acid biosynthesis; L-isoleucine biosynthesis; L-isoleucine from 2-oxobutanoate: step 2/4. It participates in amino-acid biosynthesis; L-valine biosynthesis; L-valine from pyruvate: step 2/4. Involved in the biosynthesis of branched-chain amino acids (BCAA). Catalyzes an alkyl-migration followed by a ketol-acid reduction of (S)-2-acetolactate (S2AL) to yield (R)-2,3-dihydroxy-isovalerate. In the isomerase reaction, S2AL is rearranged via a Mg-dependent methyl migration to produce 3-hydroxy-3-methyl-2-ketobutyrate (HMKB). In the reductase reaction, this 2-ketoacid undergoes a metal-dependent reduction by NADPH to yield (R)-2,3-dihydroxy-isovalerate. The chain is Ketol-acid reductoisomerase (NADP(+)) from Pyrobaculum aerophilum (strain ATCC 51768 / DSM 7523 / JCM 9630 / CIP 104966 / NBRC 100827 / IM2).